Here is a 483-residue protein sequence, read N- to C-terminus: Siroheme synthase (483 aa).

A precorrin-2 dehydrogenase /sirohydrochlorin ferrochelatase region spans residues 1 to 203 (MNYFPIFANL…RQNTLAEREL (203 aa)). Residues 22 to 23 (AV) and 43 to 44 (KH) contribute to the NAD(+) site. Serine 128 carries the post-translational modification Phosphoserine. Positions 217–483 (GSVSLVGAGP…GGLNAGQRAA (267 aa)) are uroporphyrinogen-III C-methyltransferase. Proline 226 lines the S-adenosyl-L-methionine pocket. The active-site Proton acceptor is aspartate 249. The active-site Proton donor is lysine 271. Residues 302-304 (GGD), valine 307, 332-333 (TA), methionine 384, and glycine 413 each bind S-adenosyl-L-methionine.

It in the N-terminal section; belongs to the precorrin-2 dehydrogenase / sirohydrochlorin ferrochelatase family. This sequence in the C-terminal section; belongs to the precorrin methyltransferase family.

It catalyses the reaction uroporphyrinogen III + 2 S-adenosyl-L-methionine = precorrin-2 + 2 S-adenosyl-L-homocysteine + H(+). The enzyme catalyses precorrin-2 + NAD(+) = sirohydrochlorin + NADH + 2 H(+). The catalysed reaction is siroheme + 2 H(+) = sirohydrochlorin + Fe(2+). The protein operates within cofactor biosynthesis; adenosylcobalamin biosynthesis; precorrin-2 from uroporphyrinogen III: step 1/1. It functions in the pathway cofactor biosynthesis; adenosylcobalamin biosynthesis; sirohydrochlorin from precorrin-2: step 1/1. It participates in porphyrin-containing compound metabolism; siroheme biosynthesis; precorrin-2 from uroporphyrinogen III: step 1/1. Its pathway is porphyrin-containing compound metabolism; siroheme biosynthesis; siroheme from sirohydrochlorin: step 1/1. The protein operates within porphyrin-containing compound metabolism; siroheme biosynthesis; sirohydrochlorin from precorrin-2: step 1/1. In terms of biological role, multifunctional enzyme that catalyzes the SAM-dependent methylations of uroporphyrinogen III at position C-2 and C-7 to form precorrin-2 via precorrin-1. Then it catalyzes the NAD-dependent ring dehydrogenation of precorrin-2 to yield sirohydrochlorin. Finally, it catalyzes the ferrochelation of sirohydrochlorin to yield siroheme. The polypeptide is Siroheme synthase (Neisseria meningitidis serogroup B (strain ATCC BAA-335 / MC58)).